Here is a 425-residue protein sequence, read N- to C-terminus: MPMTITEKIFAEHIGREVKPGEIIMCDVDMTIGNDITTPISIRAFNESGAEKLAKPDNFAIVLDHFIPPKDIASANQAKINRDFAYKHDLKNFFDEKDMGIEHRLLPEKGLVIPGDVIIGADSHTCTHGALGAFSTGMGSTDIAFCMITGKSWFKIPESIKVVFKGERGEHVYGKDLILELIRRIGVDGALYKALEFTGEVIENLPMDDRMSLCNMAIEAGAKNGIVAYDKITEAFLEEVKKYNPLRSEPKIHYSDPDANYSQVIEIDVNKLEPLVAYPFLPSNGKPISQAVKDDIEIDQVYIGSCTNGTLSDLRIAAEILKGKRVHRRVRLIVTPATQRIYKQAEHEGILDILIDAGAVVANPTCGACLGGYMGILGDGERAVATTNRNFRGRMGSRSSEVYLSNSAVAAASAIAGKIADPRDL.

[4Fe-4S] cluster is bound by residues Cys-306, Cys-366, and Cys-369.

The protein belongs to the aconitase/IPM isomerase family. LeuC type 2 subfamily. Heterodimer of LeuC and LeuD. [4Fe-4S] cluster is required as a cofactor.

The enzyme catalyses (2R,3S)-3-isopropylmalate = (2S)-2-isopropylmalate. It participates in amino-acid biosynthesis; L-leucine biosynthesis; L-leucine from 3-methyl-2-oxobutanoate: step 2/4. Functionally, catalyzes the isomerization between 2-isopropylmalate and 3-isopropylmalate, via the formation of 2-isopropylmaleate. The sequence is that of 3-isopropylmalate dehydratase large subunit from Nautilia profundicola (strain ATCC BAA-1463 / DSM 18972 / AmH).